The chain runs to 81 residues: Insulin (81 aa).

3 disulfides stabilise this stretch: cysteine 7-cysteine 67, cysteine 19-cysteine 80, and cysteine 66-cysteine 71. The propeptide at aspartate 33–glutamine 58 is c peptide.

It belongs to the insulin family. As to quaternary structure, heterodimer of a B chain and an A chain linked by two disulfide bonds.

The protein localises to the secreted. Functionally, insulin decreases blood glucose concentration. It increases cell permeability to monosaccharides, amino acids and fatty acids. It accelerates glycolysis, the pentose phosphate cycle, and glycogen synthesis in liver. The chain is Insulin (INS) from Anas platyrhynchos (Mallard).